A 154-amino-acid chain; its full sequence is Transcriptional repressor NrdR (154 aa).

Residues 3-34 fold into a zinc finger; that stretch reads CPYCRHPDSRVVDSREADDGQLIRRRRSCPEC. The 91-residue stretch at 46 to 136 folds into the ATP-cone domain; that stretch reads LAVVKRSGVT…VYRSFESLAD (91 aa).

The protein belongs to the NrdR family. Requires Zn(2+) as cofactor.

Its function is as follows. Negatively regulates transcription of bacterial ribonucleotide reductase nrd genes and operons by binding to NrdR-boxes. The polypeptide is Transcriptional repressor NrdR (Salinispora tropica (strain ATCC BAA-916 / DSM 44818 / JCM 13857 / NBRC 105044 / CNB-440)).